The following is a 181-amino-acid chain: Translationally-controlled tumor protein homolog (181 aa).

Positions 1–181 constitute a TCTP domain; that stretch reads MLIYKDIFTD…VKEAIIEEKC (181 aa).

Belongs to the TCTP family.

It is found in the cytoplasm. In terms of biological role, involved in calcium binding and microtubule stabilization. The polypeptide is Translationally-controlled tumor protein homolog (tct-1) (Caenorhabditis elegans).